The following is a 601-amino-acid chain: Glutathione-regulated potassium-efflux system protein KefB (601 aa).

13 helical membrane-spanning segments follow: residues alanine 4–alanine 24, isoleucine 29–phenylalanine 49, glutamate 55–leucine 75, isoleucine 87–methionine 107, phenylalanine 111–alanine 131, valine 152–glycine 172, histidine 177–glycine 197, phenylalanine 207–serine 227, leucine 230–leucine 250, alanine 262–leucine 282, leucine 284–isoleucine 304, methionine 324–alanine 344, and alanine 356–isoleucine 376. The RCK N-terminal domain maps to lysine 400 to threonine 519.

This sequence belongs to the monovalent cation:proton antiporter 2 (CPA2) transporter (TC 2.A.37) family. KefB subfamily. In terms of assembly, interacts with the regulatory subunit KefG.

It localises to the cell inner membrane. In terms of biological role, pore-forming subunit of a potassium efflux system that confers protection against electrophiles. Catalyzes K(+)/H(+) antiport. This chain is Glutathione-regulated potassium-efflux system protein KefB, found in Salmonella newport (strain SL254).